Reading from the N-terminus, the 98-residue chain is Keratinocyte differentiation-associated protein (98 aa).

An N-terminal signal peptide occupies residues Met-1–Gly-22.

Ubiquitously expressed in stratified epithelium.

Its subcellular location is the secreted. Functionally, may act as a soluble regulator of keratinocyte differentiation. May play an important role in embryonic skin morphogenesis. The chain is Keratinocyte differentiation-associated protein from Rattus norvegicus (Rat).